Reading from the N-terminus, the 228-residue chain is Phosphoribosylformylglycinamidine synthase subunit PurQ (228 aa).

One can recognise a Glutamine amidotransferase type-1 domain in the interval 3 to 226 (FAVVVFPGSN…VTYWRDAHVV (224 aa)). C86 serves as the catalytic Nucleophile. Residues H195 and E197 contribute to the active site.

As to quaternary structure, part of the FGAM synthase complex composed of 1 PurL, 1 PurQ and 2 PurS subunits.

It is found in the cytoplasm. It carries out the reaction N(2)-formyl-N(1)-(5-phospho-beta-D-ribosyl)glycinamide + L-glutamine + ATP + H2O = 2-formamido-N(1)-(5-O-phospho-beta-D-ribosyl)acetamidine + L-glutamate + ADP + phosphate + H(+). The catalysed reaction is L-glutamine + H2O = L-glutamate + NH4(+). The protein operates within purine metabolism; IMP biosynthesis via de novo pathway; 5-amino-1-(5-phospho-D-ribosyl)imidazole from N(2)-formyl-N(1)-(5-phospho-D-ribosyl)glycinamide: step 1/2. In terms of biological role, part of the phosphoribosylformylglycinamidine synthase complex involved in the purines biosynthetic pathway. Catalyzes the ATP-dependent conversion of formylglycinamide ribonucleotide (FGAR) and glutamine to yield formylglycinamidine ribonucleotide (FGAM) and glutamate. The FGAM synthase complex is composed of three subunits. PurQ produces an ammonia molecule by converting glutamine to glutamate. PurL transfers the ammonia molecule to FGAR to form FGAM in an ATP-dependent manner. PurS interacts with PurQ and PurL and is thought to assist in the transfer of the ammonia molecule from PurQ to PurL. This Anoxybacillus flavithermus (strain DSM 21510 / WK1) protein is Phosphoribosylformylglycinamidine synthase subunit PurQ.